Consider the following 309-residue polypeptide: Taste receptor type 2 member 31 (309 aa).

The Extracellular segment spans residues 1–2; that stretch reads MT. The chain crosses the membrane as a helical span at residues 3-23; sequence TFIPIIFSSVVVVLFVIGNFA. At 24–55 the chain is on the cytoplasmic side; it reads NGFIALVNSIERVKRQKISFADQILTALAVSR. Residues 56–76 form a helical membrane-spanning segment; sequence VGLLWVLLLNWYSTVFNPAFY. Residues 77–100 lie on the Extracellular side of the membrane; that stretch reads SVEVRTTAYNVWAVTGHFSNWLAT. Residues 101–121 traverse the membrane as a helical segment; it reads SLSIFYLLKIANFSNLIFLHL. Residues 122–126 lie on the Cytoplasmic side of the membrane; the sequence is KRRVK. The helical transmembrane segment at 127–147 threads the bilayer; that stretch reads SVILVMLLGPLLFLACQLFVI. Residues 148 to 181 lie on the Extracellular side of the membrane; it reads NMKEIVRTKEYEGNLTWKIKLRSAVYLSDATVTT. Asparagine 161 is a glycosylation site (N-linked (GlcNAc...) asparagine). Residues 182–202 traverse the membrane as a helical segment; sequence LGNLVPFTLTLLCFLLLICSL. Topologically, residues 203–229 are cytoplasmic; that stretch reads CKHLKKMQLHGKGSQDPSTKVHIKALQ. Residues 230–250 traverse the membrane as a helical segment; that stretch reads TVIFFLLLCAVYFLSIMISVW. Over 251–259 the chain is Extracellular; it reads SFGSLENKP. The chain crosses the membrane as a helical span at residues 260-280; it reads VFMFCKAIRFSYPSIHPFILI. At 281-309 the chain is on the cytoplasmic side; sequence WGNKKLKQTFLSVLRQVRYWVKGEKPSSP.

It belongs to the G-protein coupled receptor T2R family. Expressed in subsets of taste receptor cells of the tongue and exclusively in gustducin-positive cells.

It is found in the membrane. Functionally, receptor that may play a role in the perception of bitterness and is gustducin-linked. May play a role in sensing the chemical composition of the gastrointestinal content. The activity of this receptor may stimulate alpha gustducin, mediate PLC-beta-2 activation and lead to the gating of TRPM5. Activated by the sulfonyl amide sweeteners saccharin and acesulfame K. The sequence is that of Taste receptor type 2 member 31 (TAS2R31) from Homo sapiens (Human).